A 488-amino-acid polypeptide reads, in one-letter code: Leucine-rich repeat-containing protein 74A (488 aa).

LRR repeat units lie at residues 134–155 (AVTK…SLVE), 162–182 (YLQE…RIIS), 191–212 (SIWS…LLCQ), 219–239 (QIKK…EHLG), 247–268 (GLTS…ALCN), 275–296 (TLTK…ALGE), 303–324 (CLVY…KISK), and 331–351 (SLRV…ILLI).

The sequence is that of Leucine-rich repeat-containing protein 74A from Homo sapiens (Human).